Consider the following 101-residue polypeptide: MGTRCLLVLLLVLLVLKCEVQGDDMARQDEATGPTLLSQMQESLYGYWGSAKAAAQDLYEKTYLTAMDEKIRDMYSTSTAAVRIYTGILTDQILSMLTGDP.

The N-terminal stretch at 1-22 (MGTRCLLVLLLVLLVLKCEVQG) is a signal peptide. Positions 23–28 (DDMARQ) are cleaved as a propeptide — removed in mature form. The lipid binding stretch occupies residues 66–74 (AMDEKIRDM). Residues 78 to 101 (STAAVRIYTGILTDQILSMLTGDP) form a lipoprotein lipase cofactor region.

Belongs to the apolipoprotein C2 family. In terms of processing, proapolipoprotein C-II is synthesized as a sialic acid containing glycoprotein which is subsequently desialylated prior to its proteolytic processing. Post-translationally, proapolipoprotein C-II, the major form found in plasma undergoes proteolytic cleavage of its N-terminal hexapeptide to generate the mature form apolipoprotein C-II, which occurs as the minor form in plasma.

The protein resides in the secreted. Its function is as follows. Component of chylomicrons, very low-density lipoproteins (VLDL), low-density lipoproteins (LDL), and high-density lipoproteins (HDL) in plasma. Plays an important role in lipoprotein metabolism as an activator of lipoprotein lipase, the enzyme which hydrolyzes the triacylglycerols on chylomicrons and VLDL. This chain is Apolipoprotein C-II (APOC2), found in Panthera tigris altaica (Siberian tiger).